A 423-amino-acid chain; its full sequence is Histidine--tRNA ligase (423 aa).

The protein belongs to the class-II aminoacyl-tRNA synthetase family. In terms of assembly, homodimer.

Its subcellular location is the cytoplasm. The enzyme catalyses tRNA(His) + L-histidine + ATP = L-histidyl-tRNA(His) + AMP + diphosphate + H(+). This Staphylococcus haemolyticus (strain JCSC1435) protein is Histidine--tRNA ligase.